A 942-amino-acid chain; its full sequence is Cilia- and flagella-associated protein 69 (942 aa).

Over residues M1–A16 the composition is skewed to low complexity. The tract at residues M1 to P25 is disordered.

Expressed in ciliated olfactory sensory neurons (at protein level). Expressed in testis, specifically in sperm (at protein level).

It is found in the cell projection. It localises to the cilium. Its subcellular location is the flagellum. Its function is as follows. Cilium- and flagellum-associated protein. In the olfactory epithelium, regulates the speed of activation and termination of the odor response and thus contributes to the robustness of olfactory transduction pathways. Required for sperm flagellum assembly and stability. The chain is Cilia- and flagella-associated protein 69 from Mus musculus (Mouse).